A 634-amino-acid chain; its full sequence is MEHQQNHTFSADTGKLLKLMIHSLYSNKEIFLRELVSNAADAADKLRFKALSDGSLFENDGDLRVRLSFDADLKTITISDNGIGMSRDEVIEHLGTIAKSGTSDFFEQLSGDQVKDSQLIGQFGVGFYSSFIVADKVTVNTRKAGEPASQGTCWISTGESDYTVADIEKAGRGTEITLHLRDDETEFLNDYKLRGIVSKYSDHISIPVEMFKEATEESEGSDGEKVPATEATWEAVNKATALWSCSKSELKDEEYKEFYKHIANDFEDPLTWSHNKVEGEQAYTSLLYIPKRAPYDLWNREKAHGLKLYVQRVFVMDDAEQFMPTYLRFVKGVLDSNDLPLNVSREILQDTRVTAKLRSGCTKRVLDLLTKLAKKDDDAYNLFWKEFGQVLKEGPAEDSSNKEKIGKLFRFSSTETDSTEQTVSLDAYISRMTEGQDKIYYITADSFNAAKNSPHLEVLREKGIEVLLLSDRIDEWLLSHLPEYDGKTFTSVTQGDLDLGKLDSEEKKKEQEKQETEFASFVERVKAVLGDKVKDVRLTHRLTSTPSCIVADNDDMSTQMAKLMAQMGQPVPESKPVFELNPEHVMIVKLADMADEDLFAQWSELLLEQAILSEKGSLDDPSEFVGRINKLLLA.

Residues 1 to 345 (MEHQQNHTFS…SNDLPLNVSR (345 aa)) are a; substrate-binding. The segment at 346-562 (EILQDTRVTA…NDDMSTQMAK (217 aa)) is b. The tract at residues 563–634 (LMAQMGQPVP…VGRINKLLLA (72 aa)) is c.

This sequence belongs to the heat shock protein 90 family. In terms of assembly, homodimer.

Its subcellular location is the cytoplasm. In terms of biological role, molecular chaperone. Has ATPase activity. The chain is Chaperone protein HtpG from Psychromonas ingrahamii (strain DSM 17664 / CCUG 51855 / 37).